Here is a 499-residue protein sequence, read N- to C-terminus: Neuronal acetylcholine receptor subunit alpha-3 (499 aa).

The N-terminal stretch at Met-1–Ala-25 is a signal peptide. Residues Ser-26–Ile-244 are Extracellular-facing. Asn-49 and Asn-166 each carry an N-linked (GlcNAc...) asparagine glycan. Disulfide bonds link Cys-153–Cys-167 and Cys-217–Cys-218. The chain crosses the membrane as a helical span at residues Pro-245 to Pro-260. Residues Ser-261–Asp-262 are Cytoplasmic-facing. Residues Cys-263–Val-279 form a helical membrane-spanning segment. Glu-265 serves as a coordination point for Na(+). Residues Phe-280–Tyr-301 are Extracellular-facing. Residues Leu-302–Leu-320 traverse the membrane as a helical segment. Residues Asn-321–Val-468 are Cytoplasmic-facing. Residues Ser-407 and Ser-410 each carry the phosphoserine modification. The helical transmembrane segment at Ile-469–Gly-487 threads the bilayer. At Leu-488–Thr-499 the chain is on the extracellular side.

Belongs to the ligand-gated ion channel (TC 1.A.9) family. Acetylcholine receptor (TC 1.A.9.1) subfamily. Alpha-3/CHRNA3 sub-subfamily. Neuronal AChR is composed of two different types of subunits: alpha and beta. CHRNA3/Alpha-3 subunit can be combined to CHRNB2/beta-2 or CHRNB4/beta-4 to give rise to functional receptors. Part of a complex composed of STUB1/CHIP, VCP/p97, CHRNA3, and UBXN2A that modulates the ubiquitination and endoplasmic reticulum-associated degradation (ERAD) of CHRNA3. Within the complex UBXN2A acts as a scaffold protein required for the interaction of CHRNA3 with VCP/p97, this interaction also inhibits CHRNA3 ubiquitination by STUB1/CHIP and subsequently ERAD. Interacts with UBXN2A (via SEP domain), the interaction is required for the interaction of CHRNA3 in the STUB1:VCP:UBXN2A complex. Interacts with RIC3; which is required for proper folding and assembly. Interacts with LYPD6. Post-translationally, ubiquitinated; by STUB1/CHIP and thereafter degraded by the 26S proteosome complex. In terms of tissue distribution, expressed in the brain (at protein level).

It localises to the synaptic cell membrane. It is found in the cell membrane. Its subcellular location is the endoplasmic reticulum. The protein resides in the golgi apparatus. It catalyses the reaction K(+)(in) = K(+)(out). The enzyme catalyses Na(+)(in) = Na(+)(out). It carries out the reaction Ca(2+)(in) = Ca(2+)(out). Activated by a myriad of ligands such as acetylcholine, cytisine, nicotine, choline and epibatidine. The heteropentamer CHRNA3:CHRNB2 activity is blocked by alpha-conotoxins ImI, ImII, PnIA, GID and MII. The heteropentamer CHRNA3:CHRNB4 activity is blocked by the alpha-conotoxin ImI. Its function is as follows. Component of neuronal acetylcholine receptors (nAChRs) that function as pentameric, ligand-gated cation channels with high calcium permeability among other activities. nAChRs are excitatory neurotrasnmitter receptors formed by a collection of nAChR subunits known to mediate synaptic transmission in the nervous system and the neuromuscular junction. Each nAchR subunit confers differential attributes to channel properties, including activation, deactivation and desensitization kinetics, pH sensitivity, cation permeability, and binding to allosteric modulators. CHRNA3 forms heteropentameric neuronal acetylcholine receptors with CHRNA5, CHRNB2 and CHRNB4. CHRNA3:CHRNB4 being predominant in neurons of the autonomic ganglia, it is known as ganglionic nicotinic receptor. CHRNA3:CHRNB4 or CHRNA3:CHRNA5:CHRNB4 play also an important role in the habenulo-interpeduncular tract, modulating the mesolimbic dopamine system and affecting reward circuits and addiction. Hypothalamic CHRNA3:CHRNB4 nAChR activation by nicotine leads to activation of POMC neurons and a decrease in food intake. Also expressed in the urothelium where it modulates reflex bladder activity by increasing intracellular calcium through extracellular influx and basal ATP release. In Mus musculus (Mouse), this protein is Neuronal acetylcholine receptor subunit alpha-3 (Chrna3).